The chain runs to 293 residues: Nitrogenase iron protein (293 aa).

10–17 (GKGGIGKS) contacts ATP. C98 is a binding site for [4Fe-4S] cluster. The residue at position 101 (R101) is an ADP-ribosylarginine; by dinitrogenase reductase ADP-ribosyltransferase. Residue C133 coordinates [4Fe-4S] cluster.

This sequence belongs to the NifH/BchL/ChlL family. In terms of assembly, homodimer. Requires [4Fe-4S] cluster as cofactor. Post-translationally, the reversible ADP-ribosylation of Arg-101 inactivates the nitrogenase reductase and regulates nitrogenase activity.

The enzyme catalyses N2 + 8 reduced [2Fe-2S]-[ferredoxin] + 16 ATP + 16 H2O = H2 + 8 oxidized [2Fe-2S]-[ferredoxin] + 2 NH4(+) + 16 ADP + 16 phosphate + 6 H(+). Functionally, the key enzymatic reactions in nitrogen fixation are catalyzed by the nitrogenase complex, which has 2 components: the iron protein and the molybdenum-iron protein. This Stutzerimonas stutzeri (strain A1501) (Pseudomonas stutzeri) protein is Nitrogenase iron protein.